We begin with the raw amino-acid sequence, 404 residues long: Formate-dependent phosphoribosylglycinamide formyltransferase (404 aa).

N(1)-(5-phospho-beta-D-ribosyl)glycinamide-binding positions include 27-28 (EL) and Glu87. ATP-binding positions include Arg120, Lys162, 167–172 (SSGKGQ), 202–205 (EGFI), and Glu210. The 196-residue stretch at 125–320 (RLAAETLGLP…EFELHARALL (196 aa)) folds into the ATP-grasp domain. Mg(2+) is bound by residues Glu279 and Glu291. N(1)-(5-phospho-beta-D-ribosyl)glycinamide-binding positions include Asp298, Lys367, and 374–375 (RR).

Belongs to the PurK/PurT family. Homodimer.

The catalysed reaction is N(1)-(5-phospho-beta-D-ribosyl)glycinamide + formate + ATP = N(2)-formyl-N(1)-(5-phospho-beta-D-ribosyl)glycinamide + ADP + phosphate + H(+). Its pathway is purine metabolism; IMP biosynthesis via de novo pathway; N(2)-formyl-N(1)-(5-phospho-D-ribosyl)glycinamide from N(1)-(5-phospho-D-ribosyl)glycinamide (formate route): step 1/1. In terms of biological role, involved in the de novo purine biosynthesis. Catalyzes the transfer of formate to 5-phospho-ribosyl-glycinamide (GAR), producing 5-phospho-ribosyl-N-formylglycinamide (FGAR). Formate is provided by PurU via hydrolysis of 10-formyl-tetrahydrofolate. This Bordetella pertussis (strain Tohama I / ATCC BAA-589 / NCTC 13251) protein is Formate-dependent phosphoribosylglycinamide formyltransferase.